A 240-amino-acid chain; its full sequence is 2,3,4,5-tetrahydropyridine-2,6-dicarboxylate N-acetyltransferase (240 aa).

Belongs to the transferase hexapeptide repeat family. DapH subfamily.

The enzyme catalyses (S)-2,3,4,5-tetrahydrodipicolinate + acetyl-CoA + H2O = L-2-acetamido-6-oxoheptanedioate + CoA. Its pathway is amino-acid biosynthesis; L-lysine biosynthesis via DAP pathway; LL-2,6-diaminopimelate from (S)-tetrahydrodipicolinate (acetylase route): step 1/3. Its function is as follows. Catalyzes the transfer of an acetyl group from acetyl-CoA to tetrahydrodipicolinate. The sequence is that of 2,3,4,5-tetrahydropyridine-2,6-dicarboxylate N-acetyltransferase from Staphylococcus epidermidis (strain ATCC 12228 / FDA PCI 1200).